The sequence spans 176 residues: Glycine-rich RNA-binding protein 7 (176 aa).

At A2 the chain carries N-acetylalanine. The interval 2 to 41 (ASGDVEYRCFVGGLAWATDDRALETAFAQYGDVIDSKIIN) is required for RNA chaperone activity. An RRM domain is found at 8–86 (YRCFVGGLAW…RSITVNEAQS (79 aa)). ADP-ribosylarginine; by HopU1 is present on R49. The interval 83–103 (EAQSRGSGGGGGHRGGGGGGY) is disordered. The segment covering 88 to 103 (GSGGGGGHRGGGGGGY) has biased composition (gly residues). The glycine-rich (GR) required for cell-to-cell movement stretch occupies residues 88-175 (GSGGGGGHRG…GYGGSGGGGG (88 aa)). The interval 97 to 148 (GGGGGGYRSGGGGGYSGGGGSYGGGGGRREGGGGYSGGGGGYSSRGGGGGSY) is nuclear targeting sequence (M9). Residues S105 and S117 each carry the phosphoserine modification. Positions 131–176 (YSGGGGGYSSRGGGGGSYGGGRREGGGGYGGGEGGGYGGSGGGGGW) are disordered.

The protein belongs to the GR-RBP family. In terms of assembly, interacts with TRN1. Interacts with the Pseudomonas syringae type III effector HopU1. Binds to small phloem-mobile single-stranded RNAs (ss-sRNA, e.g. small interfering RNA (siRNA) and microRNA (miRNA)) in the phloeme exudate, including viral-derived sRNA (vsiRNA). ADP-ribosylated by the Pseudomonas syringae type III effector HopU1. ADP-ribosylation reduces the ability of the protein to bind RNA. As to expression, ubiquitous with strong expression in guard cell.

Its subcellular location is the cytoplasm. It is found in the nucleus. The protein localises to the secreted. In terms of biological role, plays a role in RNA transcription or processing during stress. Binds RNAs and DNAs sequence with a preference to single-stranded nucleic acids. Displays strong affinity to poly(U) and poly(G) sequence. Involved in mRNA alternative splicing of numerous targets by modulating splice site selection. Negatively regulates the circadian oscillations of its own transcript as well as RBG8 transcript. Forms an interlocked post-transcriptional negative feedback loop with the RBG8 autoregulatory circuit. Both proteins negatively autoregulate and reciprocally crossregulate by binding to their pre-mRNAs and promoting unproductive splicing coupled to degradation via the NMD pathway. Involved in the regulation of abscisic acid and stress responses. Affects the growth and stress tolerance under high salt and dehydration stress conditions, and also confers freezing tolerance, particularly via the regulation of stomatal opening and closing in the guard cells. Exhibits RNA chaperone activity during the cold adaptation process. Involved in the export of mRNAs from the nucleus to the cytoplasm under cold stress conditions. Target of the Pseudomonas syringae type III effector HopU1, which could probably be involved in plant innate immunity. Component of the flowering autonomous pathway which promotes floral transition, at least partly by down-regulating FLC. Mediates cell-to-cell trafficking of RNA interference (RNAi) signals (small RNAs (sRNA), e.g. small interfering RNA (siRNA) and microRNA (miRNA)) which regulate growth and development, as well as responses to environmental inputs, including pathogen attack; can compromise zucchini yellow mosaic virus (ZYMV) and tobacco rattle virus (TRV) infections at the early stage. The polypeptide is Glycine-rich RNA-binding protein 7 (Arabidopsis thaliana (Mouse-ear cress)).